The following is a 278-amino-acid chain: Elongation factor Ts (278 aa).

Positions 82–85 (TDFV) are involved in Mg(2+) ion dislocation from EF-Tu.

Belongs to the EF-Ts family.

Its subcellular location is the cytoplasm. In terms of biological role, associates with the EF-Tu.GDP complex and induces the exchange of GDP to GTP. It remains bound to the aminoacyl-tRNA.EF-Tu.GTP complex up to the GTP hydrolysis stage on the ribosome. The sequence is that of Elongation factor Ts from Streptomyces griseus subsp. griseus (strain JCM 4626 / CBS 651.72 / NBRC 13350 / KCC S-0626 / ISP 5235).